A 304-amino-acid polypeptide reads, in one-letter code: tRNA pseudouridine synthase B (304 aa).

Residue D38 is the Nucleophile of the active site. The PUA domain occupies L227–K302.

The protein belongs to the pseudouridine synthase TruB family. Type 1 subfamily.

It catalyses the reaction uridine(55) in tRNA = pseudouridine(55) in tRNA. Its function is as follows. Responsible for synthesis of pseudouridine from uracil-55 in the psi GC loop of transfer RNAs. The sequence is that of tRNA pseudouridine synthase B from Thermosipho melanesiensis (strain DSM 12029 / CIP 104789 / BI429).